Consider the following 159-residue polypeptide: Phosphopantetheine adenylyltransferase (159 aa).

Ser-9 is a substrate binding site. ATP contacts are provided by residues Ser-9 to Phe-10 and His-17. Positions 41, 73, and 87 each coordinate substrate. Residues Gly-88–Arg-90, Glu-98, and Tyr-123–Ser-129 each bind ATP.

This sequence belongs to the bacterial CoaD family. Homohexamer. The cofactor is Mg(2+).

The protein localises to the cytoplasm. It catalyses the reaction (R)-4'-phosphopantetheine + ATP + H(+) = 3'-dephospho-CoA + diphosphate. The protein operates within cofactor biosynthesis; coenzyme A biosynthesis; CoA from (R)-pantothenate: step 4/5. In terms of biological role, reversibly transfers an adenylyl group from ATP to 4'-phosphopantetheine, yielding dephospho-CoA (dPCoA) and pyrophosphate. The sequence is that of Phosphopantetheine adenylyltransferase from Shouchella clausii (strain KSM-K16) (Alkalihalobacillus clausii).